Consider the following 390-residue polypeptide: Period circadian protein (390 aa).

Disordered stretches follow at residues Val-27 to Val-120, Leu-164 to Glu-188, Gly-247 to Gln-266, and Ser-327 to Ala-356. The span at Gly-93–Ser-114 shows a compositional bias: gly residues. The segment covering Gly-247–Asn-256 has biased composition (gly residues).

In terms of assembly, forms a heterodimer with timeless (TIM); the complex then translocates into the nucleus. Phosphorylated with a circadian rhythmicity, probably by the double-time protein (dbt). Phosphorylation could be implicated in the stability of per monomer and in the formation of heterodimer per-tim.

Its subcellular location is the nucleus. The protein localises to the cytoplasm. It localises to the perinuclear region. Essential for biological clock functions. Determines the period length of circadian and ultradian rhythms; an increase in PER dosage leads to shortened circadian rhythms and a decrease leads to lengthened circadian rhythms. Essential for the circadian rhythmicity of locomotor activity, eclosion behavior, and for the rhythmic component of the male courtship song that originates in the thoracic nervous system. The biological cycle depends on the rhythmic formation and nuclear localization of the TIM-PER complex. Light induces the degradation of TIM, which promotes elimination of PER. Nuclear activity of the heterodimer coordinatively regulates PER and TIM transcription through a negative feedback loop. Behaves as a negative element in circadian transcriptional loop. Does not appear to bind DNA, suggesting indirect transcriptional inhibition. This is Period circadian protein (per) from Drosophila tropicalis (Fruit fly).